The primary structure comprises 360 residues: Snurportin-1 (360 aa).

At M1 the chain carries N-acetylmethionine. The tract at residues 1–42 is disordered; it reads MEELSQALASSFSVSQDLNSTAAPHPRLSQYKSKYSSLEQSE. Residues 1–65 form a necessary for interaction with KPNB1 and m3G-cap U1 and U5 snRNP import receptor activity region; that stretch reads MEELSQALAS…LDYVNHARRL (65 aa). A necessary for interaction with XPO1 region spans residues 1-159; sequence MEELSQALAS…NRFSSLLPGG (159 aa). Residues 7–22 show a composition bias toward polar residues; that stretch reads ALASSFSVSQDLNSTA. Residues 11–73 form the IBB domain; sequence SFSVSQDLNS…RLAEDDWTGM (63 aa). S75 carries the phosphoserine modification. Residues 127–129 form an interaction with m3G-cap structure region; it reads GKR. Residues 208-328 form a necessary for binding to the m3G-cap structure region; it reads MHSKLPEEEG…GMKEKLTHKA (121 aa). The disordered stretch occupies residues 339–360; it reads LSTPKLKGSSHSPDHPGCLMEN. S350 is modified (phosphoserine).

This sequence belongs to the snurportin family. As to quaternary structure, component of an import snRNP complex composed of KPNB1, SNUPN, SMN1 and ZNF259. Component of a nuclear export receptor complex composed of KPNB1, Ran, SNUPN and XPO1. Found in a trimeric export complex with SNUPN, Ran and XPO1. Interacts (via IBB domain) with KPNB1; the interaction is direct. Interacts with DDX20, IPO7, SMN1, SNRPB and XPO1. Interacts directly with XPO1. Its interaction with XPO1 and binding to m3G-cap U snRNPs appears to be mutually exclusive. Can form homomers.

It is found in the nucleus. It localises to the cytoplasm. Its function is as follows. Functions as an U snRNP-specific nuclear import adapter. Involved in the trimethylguanosine (m3G)-cap-dependent nuclear import of U snRNPs. Binds specifically to the terminal m3G-cap U snRNAs. This Homo sapiens (Human) protein is Snurportin-1 (SNUPN).